Here is a 198-residue protein sequence, read N- to C-terminus: Cerebellin-4 (198 aa).

A signal peptide spans 1-24 (MGSARRALSVVPAVLLILVLPVWA). N-linked (GlcNAc...) asparagine glycosylation is found at Asn26 and Asn85. A C1q domain is found at 63–198 (AANSKVAFSA…TFSGFLVFPL (136 aa)).

Homohexamer; disulfide-linked homotrimers. The trimers are assembled via the globular C1q domains. The trimers associate via N-terminal cysteine residues to form disulfide-linked hexamers. May form oligomers with CBLN1, CBLN2 and CBLN3 prior to secretion. Once secreted, does not interact with other CBLN family members. Strongly interacts with DCC in a NTN1-displaceable fashion. Weakly binds to NRXN1 and NRXN2 long and short isoforms produced by alternative promoter usage. Interaction with NRXN3 short isoform is hardly detectable; no interaction at all with NRXN3 long isoform. Does not interact with NEO1, GRID1 and GRID2. Post-translationally, sialoglycoprotein. Expressed in brain with high levels in particular thalamic nuclei. In the thalamus, predominantly expressed in neurons within the parafascicular nucleus. Found in the hippocampus, mostly in the dendrites and somata of pyramidal neurons (at protein level). Very low or no expression in most other brain regions. Highly expressed in the ventral medial habenula.

The protein resides in the secreted. It localises to the synapse. Functionally, acts as a synaptic organizer in specific subsets of neurons in the brain. Essential for the formation and maintenance of inhibitory GABAergic synapses. Promotes the development of dendrite-targeting inhibitory GABAergic synapses made by somatostatin-positive interneurons. May contribute to the function of ventral medial habenula region of the brain implicated in the regulation of anxiety-related behaviors. May play a role in CBLN3 export from the endoplasmic reticulum and secretion. This chain is Cerebellin-4 (Cbln4), found in Mus musculus (Mouse).